Here is a 374-residue protein sequence, read N- to C-terminus: Aminomethyltransferase (374 aa).

This sequence belongs to the GcvT family. As to quaternary structure, the glycine cleavage system is composed of four proteins: P, T, L and H.

It carries out the reaction N(6)-[(R)-S(8)-aminomethyldihydrolipoyl]-L-lysyl-[protein] + (6S)-5,6,7,8-tetrahydrofolate = N(6)-[(R)-dihydrolipoyl]-L-lysyl-[protein] + (6R)-5,10-methylene-5,6,7,8-tetrahydrofolate + NH4(+). Its function is as follows. The glycine cleavage system catalyzes the degradation of glycine. This chain is Aminomethyltransferase, found in Caldanaerobacter subterraneus subsp. tengcongensis (strain DSM 15242 / JCM 11007 / NBRC 100824 / MB4) (Thermoanaerobacter tengcongensis).